Here is a 196-residue protein sequence, read N- to C-terminus: Peroxynitrite isomerase (196 aa).

Positions 46–52 match the GXWXGXG motif; that stretch reads GVWRGRG. His186 contributes to the heme b binding site.

This sequence belongs to the nitrobindin family. As to quaternary structure, homodimer. Heme b is required as a cofactor.

It catalyses the reaction peroxynitrite = nitrate. Its pathway is nitrogen metabolism. Functionally, heme-binding protein able to scavenge peroxynitrite and to protect free L-tyrosine against peroxynitrite-mediated nitration, by acting as a peroxynitrite isomerase that converts peroxynitrite to nitrate. Therefore, this protein likely plays a role in peroxynitrite sensing and in the detoxification of reactive nitrogen and oxygen species (RNS and ROS, respectively). Is able to bind nitric oxide (NO) in vitro, but may act as a sensor of peroxynitrite levels in vivo. This is Peroxynitrite isomerase from Salinispora tropica (strain ATCC BAA-916 / DSM 44818 / JCM 13857 / NBRC 105044 / CNB-440).